Consider the following 442-residue polypeptide: Coiled-coil domain-containing protein 112 (442 aa).

Coiled coils occupy residues 23-116 (LEEL…RRIE) and 217-249 (LEEK…VDTV). Disordered stretches follow at residues 245–272 (KVDT…KKQK), 289–312 (KLAS…QRQS), and 392–442 (EKVE…RQGI). 2 stretches are compositionally biased toward basic and acidic residues: residues 256 to 268 (KAED…EEQR) and 294 to 310 (LREE…ERQR). Residues 281-400 (RKSLEMSAKL…KEKVENNVSR (120 aa)) adopt a coiled-coil conformation.

The protein resides in the cytoplasm. The protein localises to the cytoskeleton. Its subcellular location is the microtubule organizing center. It is found in the centrosome. It localises to the centriolar satellite. The chain is Coiled-coil domain-containing protein 112 (Ccdc112) from Mus musculus (Mouse).